The sequence spans 214 residues: Protein DMP6 (214 aa).

The next 4 membrane-spanning stretches (helical) occupy residues 52-72 (LANL…PICT), 83-103 (FMTA…SFTD), 143-163 (FIDF…VLFD), and 178-198 (VVEL…MVFA).

Belongs to the plant DMP1 protein family. Expressed constitutively in leaves, stems, flowers, siliques and roots (e.g. root hairs).

The protein resides in the vacuole membrane. In terms of biological role, involved in membrane remodeling. This chain is Protein DMP6, found in Arabidopsis thaliana (Mouse-ear cress).